The primary structure comprises 409 residues: Serine/threonine transporter SstT (409 aa).

9 consecutive transmembrane segments (helical) span residues L24–F44, F48–I68, I82–M102, A142–L162, L194–G214, L218–V238, I292–M312, G319–C339, and V365–T385.

This sequence belongs to the dicarboxylate/amino acid:cation symporter (DAACS) (TC 2.A.23) family.

The protein localises to the cell inner membrane. The catalysed reaction is L-serine(in) + Na(+)(in) = L-serine(out) + Na(+)(out). It carries out the reaction L-threonine(in) + Na(+)(in) = L-threonine(out) + Na(+)(out). In terms of biological role, involved in the import of serine and threonine into the cell, with the concomitant import of sodium (symport system). This is Serine/threonine transporter SstT from Neisseria meningitidis serogroup C (strain 053442).